A 373-amino-acid polypeptide reads, in one-letter code: MPRGGMDDHWPSSDDQGHDPKEPEQLRKLFIGGLSFETTDDSLREHFEQWGKLTDCVVMRDPQTKRSRGFGFVTYSCVEEVDASMSARPHKVDGRVVEPKRAVSREDSARPGAHLTVKKIFVGGIKEDTEEYHLRDYSESYGKIETIEVMEDRQSGKKRGFAFVTFDDHDTVDKIVVQKYHTINGHNCEVKKALSKQEMQTASAQRGRGGGGSNFMGRGGNYGGGDGGNFGRGGGGGFGNRGGYGGGGGRGGGGYGGGGDGYNGFGGDGGNYGGGPGYGGRGYGGSPGYGNQGGGYGGGGGGYDGYNESGNFGGGNYNDFGNYGGQQQSNYGPMKGGSFSGRSSGGSGSGPYGGGYGSGGGGGGGGSYGGRRF.

Residues 1-25 are disordered; the sequence is MPRGGMDDHWPSSDDQGHDPKEPEQ. 2 RRM domains span residues 27–110 and 118–206; these read RKLF…DSAR and KKIF…SAQR. Disordered regions lie at residues 196–218 and 319–373; these read KQEM…FMGR and DFGN…GRRF. Residues 207-218 are compositionally biased toward gly residues; sequence GRGGGGSNFMGR. The span at 319 to 333 shows a compositional bias: low complexity; the sequence is DFGNYGGQQQSNYGP. The span at 334–373 shows a compositional bias: gly residues; sequence MKGGSFSGRSSGGSGSGPYGGGYGSGGGGGGGGSYGGRRF.

It is found in the nucleus. The sequence is that of Heterogeneous nuclear ribonucleoprotein A3 homolog 1 from Xenopus laevis (African clawed frog).